Reading from the N-terminus, the 833-residue chain is Urease (833 aa).

One can recognise a Urease domain in the interval 395–833 (GALDVHVHYI…LPLTKRYFVY (439 aa)). Ni(2+) contacts are provided by H400 and H402. Residues H402 and A433 each contribute to the urea site. K483 contributes to the Ni(2+) binding site. K483 is subject to N6-carboxylysine. Residues H485 and H512 each coordinate urea. Residues H512 and H538 each contribute to the Ni(2+) site. The active-site Proton donor is the H586. D626 lines the Ni(2+) pocket. Urea is bound at residue A629.

In the C-terminal section; belongs to the metallo-dependent hydrolases superfamily. Urease alpha subunit family. In terms of assembly, homohexamer. Ni(2+) serves as cofactor. In terms of processing, carboxylation allows a single lysine to coordinate two nickel ions.

It carries out the reaction urea + 2 H2O + H(+) = hydrogencarbonate + 2 NH4(+). It functions in the pathway nitrogen metabolism; urea degradation; CO(2) and NH(3) from urea (urease route): step 1/1. The urease accessory proteins URE4, URE6 and URE7 are required for urease activity, URE7 supplying nickel for the functional urease. Functionally, plays a nutritional role via nitrogen acquisition in the environment. Contributes to the central nervous system invasion by enhancing yeast sequestration within microcapillary beds (such as within the brain) during hematogenous spread, thereby facilitating blood-to-brain invasion by C.neoformans. Affects fitness within the mammalian phagosome, promoting non-lytic exocytosis while delaying intracellular replication and thus reducing phagolysosomal membrane damage, events that could facilitate cryptococcal dissemination when transported inside macrophages. Urease activity is also associated with the regulation of key intracellular metabolic pathways, including melanin biosynthesis, polyamine biosynthesis, as well as intracellular levels of proline and reactive oxygen species. The chain is Urease from Cryptococcus neoformans var. neoformans serotype D (strain B-3501A) (Filobasidiella neoformans).